The sequence spans 224 residues: Small ribosomal subunit protein eS1 (224 aa).

Belongs to the eukaryotic ribosomal protein eS1 family.

This chain is Small ribosomal subunit protein eS1, found in Methanococcus maripaludis (strain C7 / ATCC BAA-1331).